Reading from the N-terminus, the 199-residue chain is NADH-quinone oxidoreductase subunit B 2 (199 aa).

[4Fe-4S] cluster-binding residues include cysteine 78, cysteine 79, cysteine 143, and cysteine 173.

This sequence belongs to the complex I 20 kDa subunit family. NDH-1 is composed of 14 different subunits. Subunits NuoB, C, D, E, F, and G constitute the peripheral sector of the complex. [4Fe-4S] cluster is required as a cofactor.

It localises to the cell inner membrane. The enzyme catalyses a quinone + NADH + 5 H(+)(in) = a quinol + NAD(+) + 4 H(+)(out). NDH-1 shuttles electrons from NADH, via FMN and iron-sulfur (Fe-S) centers, to quinones in the respiratory chain. The immediate electron acceptor for the enzyme in this species is believed to be ubiquinone. Couples the redox reaction to proton translocation (for every two electrons transferred, four hydrogen ions are translocated across the cytoplasmic membrane), and thus conserves the redox energy in a proton gradient. In Rhodopseudomonas palustris (strain BisB5), this protein is NADH-quinone oxidoreductase subunit B 2.